Here is a 178-residue protein sequence, read N- to C-terminus: Large ribosomal subunit protein uL5 (178 aa).

Belongs to the universal ribosomal protein uL5 family. In terms of assembly, part of the 50S ribosomal subunit; part of the 5S rRNA/L5/L18/L25 subcomplex. Contacts the 5S rRNA and the P site tRNA. Forms a bridge to the 30S subunit in the 70S ribosome.

This is one of the proteins that bind and probably mediate the attachment of the 5S RNA into the large ribosomal subunit, where it forms part of the central protuberance. In the 70S ribosome it contacts protein S13 of the 30S subunit (bridge B1b), connecting the 2 subunits; this bridge is implicated in subunit movement. Contacts the P site tRNA; the 5S rRNA and some of its associated proteins might help stabilize positioning of ribosome-bound tRNAs. This Syntrophomonas wolfei subsp. wolfei (strain DSM 2245B / Goettingen) protein is Large ribosomal subunit protein uL5.